Reading from the N-terminus, the 267-residue chain is Large ribosomal subunit protein bL9m (267 aa).

The N-terminal 52 residues, Met1–Gly52, are a transit peptide targeting the mitochondrion.

Belongs to the bacterial ribosomal protein bL9 family. As to quaternary structure, component of the mitochondrial ribosome large subunit (39S) which comprises a 16S rRNA and about 50 distinct proteins.

The protein localises to the mitochondrion. In Papio anubis (Olive baboon), this protein is Large ribosomal subunit protein bL9m (MRPL9).